Reading from the N-terminus, the 110-residue chain is UPF0060 membrane protein Noc_2955 (110 aa).

4 consecutive transmembrane segments (helical) span residues 7 to 27 (VGLF…AYLW), 33 to 53 (TIWL…LLSL), 63 to 83 (AAYG…VNGI), and 87 to 107 (TWDL…MFAP).

It belongs to the UPF0060 family.

Its subcellular location is the cell inner membrane. The chain is UPF0060 membrane protein Noc_2955 from Nitrosococcus oceani (strain ATCC 19707 / BCRC 17464 / JCM 30415 / NCIMB 11848 / C-107).